The chain runs to 119 residues: Large ribosomal subunit protein uL22 (119 aa).

This sequence belongs to the universal ribosomal protein uL22 family. In terms of assembly, part of the 50S ribosomal subunit.

Its function is as follows. This protein binds specifically to 23S rRNA; its binding is stimulated by other ribosomal proteins, e.g. L4, L17, and L20. It is important during the early stages of 50S assembly. It makes multiple contacts with different domains of the 23S rRNA in the assembled 50S subunit and ribosome. Functionally, the globular domain of the protein is located near the polypeptide exit tunnel on the outside of the subunit, while an extended beta-hairpin is found that lines the wall of the exit tunnel in the center of the 70S ribosome. This chain is Large ribosomal subunit protein uL22, found in Chlorobium luteolum (strain DSM 273 / BCRC 81028 / 2530) (Pelodictyon luteolum).